Here is a 371-residue protein sequence, read N- to C-terminus: UDP-N-acetylglucosamine--N-acetylmuramyl-(pentapeptide) pyrophosphoryl-undecaprenol N-acetylglucosamine transferase (371 aa).

Residues 10 to 12 (TGG), Asn124, Arg165, Ser191, Ile246, and Gln291 contribute to the UDP-N-acetyl-alpha-D-glucosamine site.

The protein belongs to the glycosyltransferase 28 family. MurG subfamily.

It is found in the cell inner membrane. It carries out the reaction di-trans,octa-cis-undecaprenyl diphospho-N-acetyl-alpha-D-muramoyl-L-alanyl-D-glutamyl-meso-2,6-diaminopimeloyl-D-alanyl-D-alanine + UDP-N-acetyl-alpha-D-glucosamine = di-trans,octa-cis-undecaprenyl diphospho-[N-acetyl-alpha-D-glucosaminyl-(1-&gt;4)]-N-acetyl-alpha-D-muramoyl-L-alanyl-D-glutamyl-meso-2,6-diaminopimeloyl-D-alanyl-D-alanine + UDP + H(+). The protein operates within cell wall biogenesis; peptidoglycan biosynthesis. In terms of biological role, cell wall formation. Catalyzes the transfer of a GlcNAc subunit on undecaprenyl-pyrophosphoryl-MurNAc-pentapeptide (lipid intermediate I) to form undecaprenyl-pyrophosphoryl-MurNAc-(pentapeptide)GlcNAc (lipid intermediate II). This chain is UDP-N-acetylglucosamine--N-acetylmuramyl-(pentapeptide) pyrophosphoryl-undecaprenol N-acetylglucosamine transferase, found in Geobacter sp. (strain M21).